The primary structure comprises 554 residues: Glutamine--tRNA ligase (554 aa).

The 'HIGH' region motif lies at 34–44; sequence PEPNGYLHIGH. ATP contacts are provided by residues 35-37 and 41-47; these read EPN and HIGHAKS. D67 and Y212 together coordinate L-glutamine. ATP contacts are provided by residues T231, 261-262, and 269-271; these read RL and MSK. Positions 268–272 match the 'KMSKS' region motif; that stretch reads IMSKR.

The protein belongs to the class-I aminoacyl-tRNA synthetase family. In terms of assembly, monomer.

The protein localises to the cytoplasm. It carries out the reaction tRNA(Gln) + L-glutamine + ATP = L-glutaminyl-tRNA(Gln) + AMP + diphosphate. The polypeptide is Glutamine--tRNA ligase (Serratia proteamaculans (strain 568)).